The following is a 725-amino-acid chain: Phosphoribosylformylglycinamidine synthase subunit PurL (725 aa).

The active site involves histidine 34. Position 37 (tyrosine 37) interacts with ATP. Mg(2+) is bound at residue glutamate 93. Residues 94-97 (SHNH) and arginine 116 contribute to the substrate site. The active-site Proton acceptor is the histidine 95. Aspartate 117 serves as a coordination point for Mg(2+). A disordered region spans residues 220-241 (GASFASEDLSEDAETEDRPAVQ). Residue glutamine 241 participates in substrate binding. Mg(2+) is bound at residue aspartate 269. 313–315 (ESQ) is a substrate binding site. ATP-binding residues include aspartate 489 and glycine 526. Asparagine 527 contacts Mg(2+). Serine 529 contributes to the substrate binding site.

Belongs to the FGAMS family. Monomer. Part of the FGAM synthase complex composed of 1 PurL, 1 PurQ and 2 PurS subunits.

The protein localises to the cytoplasm. The catalysed reaction is N(2)-formyl-N(1)-(5-phospho-beta-D-ribosyl)glycinamide + L-glutamine + ATP + H2O = 2-formamido-N(1)-(5-O-phospho-beta-D-ribosyl)acetamidine + L-glutamate + ADP + phosphate + H(+). It participates in purine metabolism; IMP biosynthesis via de novo pathway; 5-amino-1-(5-phospho-D-ribosyl)imidazole from N(2)-formyl-N(1)-(5-phospho-D-ribosyl)glycinamide: step 1/2. Its function is as follows. Part of the phosphoribosylformylglycinamidine synthase complex involved in the purines biosynthetic pathway. Catalyzes the ATP-dependent conversion of formylglycinamide ribonucleotide (FGAR) and glutamine to yield formylglycinamidine ribonucleotide (FGAM) and glutamate. The FGAM synthase complex is composed of three subunits. PurQ produces an ammonia molecule by converting glutamine to glutamate. PurL transfers the ammonia molecule to FGAR to form FGAM in an ATP-dependent manner. PurS interacts with PurQ and PurL and is thought to assist in the transfer of the ammonia molecule from PurQ to PurL. The chain is Phosphoribosylformylglycinamidine synthase subunit PurL from Haloquadratum walsbyi (strain DSM 16790 / HBSQ001).